The sequence spans 1241 residues: ATP-dependent helicase/nuclease subunit A (1241 aa).

The UvrD-like helicase ATP-binding domain maps to 12-485 (SQWTDDQWKA…IDLAKNFRSR (474 aa)). Residue 33-40 (AAAGSGKT) participates in ATP binding. Residues 505-805 (GEIDYDADAE…RIMTIHKSKG (301 aa)) enclose the UvrD-like helicase C-terminal domain.

Belongs to the helicase family. AddA subfamily. As to quaternary structure, heterodimer of AddA and AddB/RexB. Requires Mg(2+) as cofactor.

It carries out the reaction Couples ATP hydrolysis with the unwinding of duplex DNA by translocating in the 3'-5' direction.. It catalyses the reaction ATP + H2O = ADP + phosphate + H(+). Its function is as follows. The heterodimer acts as both an ATP-dependent DNA helicase and an ATP-dependent, dual-direction single-stranded exonuclease. Recognizes the chi site generating a DNA molecule suitable for the initiation of homologous recombination. The AddA nuclease domain is required for chi fragment generation; this subunit has the helicase and 3' -&gt; 5' nuclease activities. This chain is ATP-dependent helicase/nuclease subunit A, found in Bacillus cereus (strain Q1).